The following is a 311-amino-acid chain: Natural killer cell receptor 2B4 (311 aa).

The N-terminal stretch at 1 to 19 (MLQQTVLLSLFLLLRAHQG) is a signal peptide. The Extracellular portion of the chain corresponds to 20–223 (QDCADSSEEV…CQSVPSKFNY (204 aa)). A disulfide bond links C22 and C118. 2 consecutive Ig-like domains span residues 22-128 (CADS…LIFD) and 131-215 (ETPH…QSCQ). N-linked (GlcNAc...) asparagine glycans are attached at residues N101, N144, N160, N183, N196, and N205. A disulfide bond links C153 and C195. The chain crosses the membrane as a helical span at residues 224–247 (LPFMVSIGILVKFFHGAIDCFCVW). Topologically, residues 248–311 (NRKRKQSQSI…RRLFQFINRS (64 aa)) are cytoplasmic. The disordered stretch occupies residues 275–301 (RDQRGHFRASGSSSDVRGDERGQRESD). Basic and acidic residues predominate over residues 290–301 (VRGDERGQRESD).

As to quaternary structure, interacts with CD48. Interacts (via phosphorylated ITSM 1-4) with SH2D1A (via SH2 domain); SH2D1A probably mediates association with FYN. Interacts (via phosphorylated ITSM 3) with PTPN11/SHP-2, INPP5D/SHIP1, PTPN6/SHP-1 and CSK; binding of SH2D1A/SAP prevents association with PTPN11, PTPN6 and CSK; conflictingly a similar association has been described for phosphorylated ITSM 1 also including GRB2 and PLCG1. Interacts weakly (via phosphorylated ITSM 2) with PTPN11/SHP-2 and CSK. Interacts with SH2D1B. Interacts with PIK3R1; PI3K recruits SH2D1A. Interacts with MHC class I proteins; the interaction is proposed to prevent self-killing of NK cells. N-linked glycosylation is essential for the binding to its ligand CD48. Also O-glycosylated, in contrast, O-linked sialylation has a negative impact on ligand binding. Post-translationally, phosphorylated by FYN and CSK on tyrosine residues following activation. Coligation with inhibitory receptors such as KIR2DL1 inhibits phosphorylation upon contact of NK cells with sensitive target cells.

Its subcellular location is the membrane. It localises to the cell membrane. The protein resides in the membrane raft. Functionally, heterophilic receptor of the signaling lymphocytic activation molecule (SLAM) family; its ligand is CD48. SLAM receptors triggered by homo- or heterotypic cell-cell interactions are modulating the activation and differentiation of a wide variety of immune cells and thus are involved in the regulation and interconnection of both innate and adaptive immune response. Activities are controlled by presence or absence of small cytoplasmic adapter proteins, SH2D1A/SAP and/or SH2D1B/EAT-2. Acts as activating natural killer (NK) cell receptor. Activating function implicates association with SH2D1A and FYN. Downstreaming signaling involves predominantly VAV1, and, to a lesser degree, INPP5D/SHIP1 and CBL. Signal attenuation in the absence of SH2D1A is proposed to be dependent on INPP5D and to a lesser extent PTPN6/SHP-1 and PTPN11/SHP-2. Stimulates NK cell cytotoxicity, production of IFN-gamma and granule exocytosis. Optimal expansion and activation of NK cells seems to be dependent on the engagement of CD244 with CD48 expressed on neighboring NK cells. Acts as costimulator in NK activation by enhancing signals by other NK receptors such as NCR3 and NCR1. At early stages of NK cell differentiation may function as an inhibitory receptor possibly ensuring the self-tolerance of developing NK cells. Involved in the regulation of CD8(+) T-cell proliferation; expression on activated T-cells and binding to CD48 provides costimulatory-like function for neighboring T-cells. Inhibits inflammatory responses in dendritic cells (DCs). The chain is Natural killer cell receptor 2B4 (Cd244) from Rattus norvegicus (Rat).